The sequence spans 89 residues: Ixosin-B (89 aa).

An N-terminal signal peptide occupies residues 1–26; it reads MASGWTHRLLLLAAVVTLGATPIAAA. Positions 27-57 are excised as a propeptide; it reads SMEYLVTAPGYLTPNADIKITAVVTNPSSAG. Positions 68–89 are disordered; sequence SGIQPEQHSSGKSDVRRWRSRY. Residues 76–89 show a composition bias toward basic and acidic residues; that stretch reads SSGKSDVRRWRSRY.

Its function is as follows. Has antifungal activity against C.albicans. Has antibacterial activity against the Gram-positive bacterium S.aureus and the Gram-negative bacterium E.coli. Lacks hemolytic activity against rabbit erythrocytes. This Ixodes sinensis (Hard tick) protein is Ixosin-B.